We begin with the raw amino-acid sequence, 226 residues long: ATP synthase F(0) complex subunit a (226 aa).

6 helical membrane passes run 6–26 (FASF…IIMF), 68–88 (WSLM…LGLL), 97–117 (QLSM…FTGF), 136–156 (LLIP…PVAL), 164–184 (ITAG…LLNI), and 189–209 (AFIT…VALI).

It belongs to the ATPase A chain family. Component of the ATP synthase complex composed at least of ATP5F1A/subunit alpha, ATP5F1B/subunit beta, ATP5MC1/subunit c (homooctomer), MT-ATP6/subunit a, MT-ATP8/subunit 8, ATP5ME/subunit e, ATP5MF/subunit f, ATP5MG/subunit g, ATP5MK/subunit k, ATP5MJ/subunit j, ATP5F1C/subunit gamma, ATP5F1D/subunit delta, ATP5F1E/subunit epsilon, ATP5PF/subunit F6, ATP5PB/subunit b, ATP5PD/subunit d, ATP5PO/subunit OSCP. ATP synthase complex consists of a soluble F(1) head domain (subunits alpha(3) and beta(3)) - the catalytic core - and a membrane F(0) domain - the membrane proton channel (subunits c, a, 8, e, f, g, k and j). These two domains are linked by a central stalk (subunits gamma, delta, and epsilon) rotating inside the F1 region and a stationary peripheral stalk (subunits F6, b, d, and OSCP). Interacts with DNAJC30; interaction is direct.

It is found in the mitochondrion inner membrane. The enzyme catalyses H(+)(in) = H(+)(out). Functionally, subunit a, of the mitochondrial membrane ATP synthase complex (F(1)F(0) ATP synthase or Complex V) that produces ATP from ADP in the presence of a proton gradient across the membrane which is generated by electron transport complexes of the respiratory chain. ATP synthase complex consist of a soluble F(1) head domain - the catalytic core - and a membrane F(1) domain - the membrane proton channel. These two domains are linked by a central stalk rotating inside the F(1) region and a stationary peripheral stalk. During catalysis, ATP synthesis in the catalytic domain of F(1) is coupled via a rotary mechanism of the central stalk subunits to proton translocation. With the subunit c (ATP5MC1), forms the proton-conducting channel in the F(0) domain, that contains two crucial half-channels (inlet and outlet) that facilitate proton movement from the mitochondrial intermembrane space (IMS) into the matrix. Protons are taken up via the inlet half-channel and released through the outlet half-channel, following a Grotthuss mechanism. This chain is ATP synthase F(0) complex subunit a, found in Sus scrofa (Pig).